Here is a 450-residue protein sequence, read N- to C-terminus: Sensor histidine kinase EnvZ (450 aa).

The Cytoplasmic portion of the chain corresponds to 1–15 (MRRLRFSPRSSFART). Residues 16–35 (LLLIVTLLFASLVTTYLVVL) form a helical membrane-spanning segment. Over 36-158 (NFAILPSLQQ…LTEIHQGDFS (123 aa)) the chain is Periplasmic. The polyP-periplasmic motif motif lies at 71–75 (VVPPA). The helical transmembrane segment at 159–179 (PLFRYTLAIMLLAIGGAWLFI) threads the bilayer. In terms of domain architecture, HAMP spans 180 to 232 (RIQNRPLVDLEHAALQVGKGIIPPPLREYGASEVRSVTRAFNHMAAGVKQLAD). Topologically, residues 180-450 (RIQNRPLVDL…TRAQGTTKEG (271 aa)) are cytoplasmic. The polyP-cytoplasmic motif signature appears at 201–205 (IPPPL). The cytoplasmic dimerization domain (CDD), when dimerized forms osmosensitive core stretch occupies residues 223 to 289 (MAAGVKQLAD…IIEQFIDYLR (67 aa)). A Histidine kinase domain is found at 240 to 440 (GVSHDLRTPL…SIRAWLPVPV (201 aa)). ATP is bound by residues histidine 243, 347-351 (NAARY), aspartate 373, 392-393 (RG), and 402-406 (TGLGL). A Phosphohistidine; by autocatalysis modification is found at histidine 243.

Homodimer. Interacts with MzrA. In terms of processing, autophosphorylated. Incubation of isolated EnvZ C-terminal fragment (residues 180-450) with increasing levels of NaCl or sucrose increases its autophosphorylation.

The protein resides in the cell inner membrane. It carries out the reaction ATP + protein L-histidine = ADP + protein N-phospho-L-histidine.. With respect to regulation, activity is modulated by MzrA. In the presence of 0.2 M NaCl, 2.0 mM sodium cholate (bile salts) decreases expression from the ompC promoter; how this is mediated is unknown. Autophosphorylation is inhibited by the angucycline antibiotic waldiomycin in a non-competitive manner; waldiomycin prevents dimerization of the cytoplasmic domain and autophosphorylation. Member of the two-component regulatory system EnvZ/OmpR involved in osmoregulation (particularly of genes ompF and ompC) as well as other genes. EnvZ functions as a membrane-associated protein kinase that phosphorylates OmpR in response to environmental signals; at low osmolarity OmpR activates ompF transcription, while at high osmolarity it represses ompF and activates ompC transcription. Also dephosphorylates OmpR in the presence of ATP. The cytoplasmic dimerization domain (CDD) forms an osmosensitive core; increasing osmolarity stabilizes this segment (possibly by its contraction), enhancing the autophosphorylation rate and consequently, downstream phosphotransfer to OmpR and signaling. Autophosphorylation is greater when full-length EnvZ is reconstituted in a lipid environment, lipid-mediated allostery impacts the kinase function of EnvZ. Involved in acid stress response; this requires EnvZ but not OmpR phosphorylation, and suggests that EnvZ senses cytoplasmic acidic pH. The polypeptide is Sensor histidine kinase EnvZ (envZ) (Escherichia coli (strain K12)).